The chain runs to 146 residues: Small ribosomal subunit protein bS6 (146 aa).

A disordered region spans residues 94–146; it reads GPITTPSPMMQEGKSRPPHSSDEDSENTAPAKAKTADSPGEDTRTTEESDPKP. 2 stretches are compositionally biased toward basic and acidic residues: residues 106-115 and 134-146; these read GKSRPPHSSD and EDTR…DPKP.

It belongs to the bacterial ribosomal protein bS6 family.

In terms of biological role, binds together with bS18 to 16S ribosomal RNA. This Nitrosomonas europaea (strain ATCC 19718 / CIP 103999 / KCTC 2705 / NBRC 14298) protein is Small ribosomal subunit protein bS6.